An 858-amino-acid chain; its full sequence is Potassium transporter 7 (858 aa).

2 stretches are compositionally biased toward acidic residues: residues 1 to 16 and 38 to 53; these read MAEE…EEID and QDDD…DNDG. The disordered stretch occupies residues 1–68; it reads MAEESSMEGS…LESDEDEIPE (68 aa). Residues 1–104 are Cytoplasmic-facing; that stretch reads MAEESSMEGS…DYEDLTVGRK (104 aa). Residues 105 to 125 traverse the membrane as a helical segment; that stretch reads VLLAFQTLGVVFGDVGTSPLY. Residues 126–147 lie on the Extracellular side of the membrane; sequence TFSVMFSKSPVQEKEDVIGALS. Residues 148-168 form a helical membrane-spanning segment; it reads LVLYTLLLVPLIKYVLVVLWA. At 169–232 the chain is on the cytoplasmic side; that stretch reads NDDGEGGTFA…KLENSLILKK (64 aa). The chain crosses the membrane as a helical span at residues 233–253; it reads ILLVLVLAGTSMVIADGVVTP. Over 254–269 the chain is Extracellular; the sequence is AMSVMSAVGGLKVGVD. Residues 270 to 290 form a helical membrane-spanning segment; it reads VVEQDQVVMISVAFLVILFSL. Residues 291–297 are Cytoplasmic-facing; the sequence is QKYGTSK. The chain crosses the membrane as a helical span at residues 298–318; that stretch reads MGLVVGPALLIWFCSLAGIGI. Residues 319–345 lie on the Extracellular side of the membrane; sequence YNLIKYDSSVYRAFNPVHIYYFFKRNS. The chain crosses the membrane as a helical span at residues 346–366; that stretch reads INAWYALGGCILCATGSEALF. Topologically, residues 367–380 are cytoplasmic; that stretch reads ADLCYFSVRSVQLT. A helical membrane pass occupies residues 381 to 401; it reads FVCLVLPCLMLGYMGQAAYLM. The Extracellular segment spans residues 402 to 413; that stretch reads ENHADASQAFFS. A helical transmembrane segment spans residues 414-434; sequence SVPGSAFWPVLFIANIAALIA. The Cytoplasmic segment spans residues 435–470; it reads SRTMTTATFSCIKQSTALGCFPRLKIIHTSRKFMGQ. Residues 471–491 traverse the membrane as a helical segment; the sequence is IYIPVLNWFLLAVCLVVVCSI. Residues 492 to 496 lie on the Extracellular side of the membrane; it reads SSIDE. Residues 497–517 form a helical membrane-spanning segment; that stretch reads IGNAYGMAELGVMMTTTILVT. A topological domain (cytoplasmic) is located at residue Leu518. Residues 519-539 traverse the membrane as a helical segment; it reads IMLLIWQINIVIVIAFLVVFL. At 540–552 the chain is on the extracellular side; sequence GVELVFFSSVIAS. Residues 553 to 573 traverse the membrane as a helical segment; the sequence is VGDGSWIILVFAVIMFGIMYI. Topologically, residues 574-858 are cytoplasmic; the sequence is WNYGSKLRYE…LMQVGMTYMV (285 aa). The interval 707–731 is disordered; it reads QERSLESDGNDDSDSEEDFPGSRVV. Residues 714-725 show a composition bias toward acidic residues; that stretch reads DGNDDSDSEEDF. Phosphoserine occurs at positions 719 and 721.

Belongs to the HAK/KUP transporter (TC 2.A.72.3) family.

The protein localises to the cell membrane. Its function is as follows. Probable potassium transporter. The polypeptide is Potassium transporter 7 (POT7) (Arabidopsis thaliana (Mouse-ear cress)).